The chain runs to 203 residues: Putative 3-methyladenine DNA glycosylase (203 aa).

Belongs to the DNA glycosylase MPG family.

The protein is Putative 3-methyladenine DNA glycosylase of Clostridium botulinum (strain Langeland / NCTC 10281 / Type F).